Reading from the N-terminus, the 348-residue chain is CCN family member 2 (348 aa).

Residues 1 to 25 (MLASVAGPISLALVLLALCTRPAMG) form the signal peptide. Positions 26 to 97 (QDCSAQCQCA…NRKIGVCTAK (72 aa)) constitute an IGFBP N-terminal domain. Intrachain disulfides connect Cys-28–Cys-53, Cys-32–Cys-55, Cys-34–Cys-56, Cys-42–Cys-59, Cys-67–Cys-81, and Cys-73–Cys-94. The region spanning 100–166 (APCVFGGSVY…GKCCEEWVCD (67 aa)) is the VWFC domain. In terms of domain architecture, TSP type-1 spans 197 to 242 (NCLVQTTEWSACSKTCGMGISTRVTNDNTFCRLEKQSRLCMVRPCE). A heparin-binding region spans residues 246–348 (EENIKKGKKC…YYRKMYGDMA (103 aa)). Intrachain disulfides connect Cys-255/Cys-292, Cys-272/Cys-306, Cys-283/Cys-322, Cys-286/Cys-324, and Cys-291/Cys-328. Residues 255-329 (CIRTPKIAKP…KTCACHYNCP (75 aa)) form the CTCK domain.

This sequence belongs to the CCN family. As to quaternary structure, monomer. Interacts with TSKU. In terms of tissue distribution, testis, spleen, kidney, lung, heart, and brain (lowest level in testis and highest in lung).

It is found in the secreted. The protein resides in the extracellular space. It localises to the extracellular matrix. Functionally, major connective tissue mitoattractant secreted by vascular endothelial cells. Promotes proliferation and differentiation of chondrocytes. Is involved in the stimulation of osteoblast differentiation and has a critical role in osteogenesis. Mediates heparin- and divalent cation-dependent cell adhesion in many cell types including fibroblasts, myofibroblasts, endothelial and epithelial cells. Enhances fibroblast growth factor-induced DNA synthesis. The chain is CCN family member 2 from Mus musculus (Mouse).